A 388-amino-acid polypeptide reads, in one-letter code: Chorismate synthase (388 aa).

NADP(+) contacts are provided by arginine 39 and arginine 45. FMN contacts are provided by residues arginine 132–serine 134, asparagine 251–alanine 252, glycine 296, lysine 311–threonine 315, and arginine 337.

The protein belongs to the chorismate synthase family. As to quaternary structure, homotetramer. Requires FMNH2 as cofactor.

The enzyme catalyses 5-O-(1-carboxyvinyl)-3-phosphoshikimate = chorismate + phosphate. Its pathway is metabolic intermediate biosynthesis; chorismate biosynthesis; chorismate from D-erythrose 4-phosphate and phosphoenolpyruvate: step 7/7. In terms of biological role, catalyzes the anti-1,4-elimination of the C-3 phosphate and the C-6 proR hydrogen from 5-enolpyruvylshikimate-3-phosphate (EPSP) to yield chorismate, which is the branch point compound that serves as the starting substrate for the three terminal pathways of aromatic amino acid biosynthesis. This reaction introduces a second double bond into the aromatic ring system. In Staphylococcus aureus (strain Mu50 / ATCC 700699), this protein is Chorismate synthase.